A 313-amino-acid polypeptide reads, in one-letter code: MNTFSQVWVFSDTPSRLPELMNGAQALANQINAFVLNDADGAQAIQLGANHVWKLNGKPDDRMIEDYASVMADTIRQHGADGLVLLPNTRRGKLLAAKLGYRLKAAVSNDASTVSVQDGKATVKHMVYGGLAIGEERIATPYAVLTISSGTFDAAQPDASRTGETHTVEWQAPAVAITRTATQARQSNSVDLDKARLVVSVGRGIGSKENIALAEQLCKAIGAELACSRPVAENEKWMEHERYVGISNLMLKPELYLAVGISGQIQHMVGANASQTIFAINKDKNAPIFQYADYGIVGDAVKILPALTAALAR.

255 to 283 provides a ligand contact to FAD; it reads LYLAVGISGQIQHMVGANASQTIFAINKD.

Belongs to the ETF alpha-subunit/FixB family. Heterodimer of FixA and FixB.

Its pathway is amine and polyamine metabolism; carnitine metabolism. Required for anaerobic carnitine reduction. May bring reductant to CaiA. This Escherichia coli O157:H7 protein is Protein FixB.